A 300-amino-acid polypeptide reads, in one-letter code: Enoyl-CoA hydratase domain-containing protein 3, mitochondrial (300 aa).

Residues 1–66 constitute a mitochondrion transit peptide; sequence MALVAGLRAF…RNIVLSNPRR (66 aa). The tract at residues 32 to 54 is disordered; it reads SPGSARPAGPESEPRLTSTRQQD. At Lys110 the chain carries N6-succinyllysine.

This sequence belongs to the enoyl-CoA hydratase/isomerase family.

It is found in the mitochondrion. In terms of biological role, may play a role in fatty acid biosynthesis and insulin sensitivity. The polypeptide is Enoyl-CoA hydratase domain-containing protein 3, mitochondrial (Rattus norvegicus (Rat)).